The primary structure comprises 464 residues: MIDKVRAFIHRHQLLSEGAAVIVGVSGGPDSLALLHVFLSLRDEWKLQVIAAHVDHMFRGRESEEEMEFVKRFCVERRILCETAQIDVPAFQRSAGLGAQEAARICRYRFFAELMEKHQAGYVAVGHHGDDQVETILMRLVRGSTSKGYAGIPVKRPFHGGYLIRPFLAVSRAEIEAYCRQMGLSPRCDPSNEKDDYTRNRFRHHIVPLLRQENPRLHERFQQYSEMMAEDEQFLEELAADALNKVMEKQHRDAALSIGPFLELPRPLQRRVLQLLLLRLYGGVPPTLTSVHIGHILMLCERGRPSGMIDLPKGLKVIRSYDRCLFTFDAESGEKGYWFELPVPALLPLPNGYAIISEFGEHYPRKQAGNDWFVVDPASVSLPLRVRTRRRGDRMVLKGTGGTKKLKEIFIEAKIPRMERDRWPIVEDADGRILWVPGLKKSAFEAQNRGQARYILLQYQAMNS.

ATP is bound at residue 26 to 31; it reads SGGPDS.

The protein belongs to the tRNA(Ile)-lysidine synthase family.

Its subcellular location is the cytoplasm. It carries out the reaction cytidine(34) in tRNA(Ile2) + L-lysine + ATP = lysidine(34) in tRNA(Ile2) + AMP + diphosphate + H(+). Functionally, ligates lysine onto the cytidine present at position 34 of the AUA codon-specific tRNA(Ile) that contains the anticodon CAU, in an ATP-dependent manner. Cytidine is converted to lysidine, thus changing the amino acid specificity of the tRNA from methionine to isoleucine. The protein is tRNA(Ile)-lysidine synthase of Geobacillus kaustophilus (strain HTA426).